Here is a 3567-residue protein sequence, read N- to C-terminus: Erythronolide synthase EryA2 (3567 aa).

The Ketosynthase family 3 (KS3) 1 domain occupies 30–455; that stretch reads SDPIAIVSMA…GTNAHVIVEE (426 aa). Module stretches follow at residues 33–1467 and 1491–3485; these read IAIV…QHLR and IAIV…EHLR. The active-site Acyl-thioester intermediate; for beta-ketoacyl synthase 1 activity is the C202. Residues H337 and H377 each act as for beta-ketoacyl synthase 1 activity in the active site. The acyltransferase 1 stretch occupies residues 560 to 880; the sequence is VFLFPGQGSQ…MATAHVSGVD (321 aa). S651 acts as the Acyl-ester intermediate; for acyltransferase 1 activity in catalysis. Residues 1132 to 1297 are C2-type beta-ketoacyl reductase 1; sequence GTVLVTGAAS…CTSVAWTPWA (166 aa). Catalysis depends on Y1267, which acts as the For C2-type beta-ketoacyl reductase 1 and probable racemase activity. The tract at residues 1364 to 1385 is disordered; it reads GRGGQAEAEPDSGPTGEPAQRL. In terms of domain architecture, Carrier 1 spans 1395–1470; it reads ENLLELVANA…ALAQHLRARL (76 aa). At S1430 the chain carries O-(pantetheine 4'-phosphoryl)serine. The Ketosynthase family 3 (KS3) 2 domain occupies 1488-1912; that stretch reads SEPIAIVGIG…GTNAHVIVEE (425 aa). Catalysis depends on C1661, which acts as the Acyl-thioester intermediate; for beta-ketoacyl synthase 2 activity. Residues H1796 and H1834 each act as for beta-ketoacyl synthase 2 activity in the active site. The acyltransferase 2 stretch occupies residues 2015–2331; it reads LVFPGQGAQW…NLLRAHVHGV (317 aa). S2105 acts as the Acyl-ester intermediate; for acyltransferase 2 activity in catalysis. Positions 2377–2502 are N-terminal hotdog fold; the sequence is HPLLLAAVDV…GTLAQGVAAG (126 aa). Positions 2377-2645 are dehydratase; sequence HPLLLAAVDV…SLVVRSTGEK (269 aa). The PKS/mFAS DH domain maps to 2377–2648; that stretch reads HPLLLAAVDV…VRSTGEKWEQ (272 aa). Catalysis depends on H2409, which acts as the Proton acceptor; for dehydratase activity. The C-terminal hotdog fold stretch occupies residues 2514–2648; sequence AVRIPLDDHY…VRSTGEKWEQ (135 aa). D2571 acts as the Proton donor; for dehydratase activity in catalysis. The interval 2831-3131 is enoyl reductase; it reads GAIDSVAFEP…RGRHVGKLVL (301 aa). Y2874 functions as the For enoyl reductase activity in the catalytic mechanism. NADP(+) is bound by residues 2964–2973, 3149–3152, 3173–3176, 3202–3203, K3250, and 3272–3273; these read HAAAGGVGMA, TGTL, SRRG, DT, and FS. The beta-ketoacyl reductase 2 stretch occupies residues 3141–3317; sequence GTVLITGGTG…AKALGWGLWA (177 aa). The For beta-ketoacyl reductase 2 activity role is filled by Y3287. The Carrier 2 domain occupies 3413 to 3488; the sequence is AGLAELVRSH…AVAEHLRDRL (76 aa). The residue at position 3448 (S3448) is an O-(pantetheine 4'-phosphoryl)serine.

In terms of assembly, homodimer. Erythronolide synthase is composed of EryAI, EryAII and EryAIII multimodular (2 modules) polypeptides each coding for a functional synthase subunit which participates in 2 of the six FAS-like elongation steps required for formation of the polyketide. Module 1, 2, 3, 4, 5, and 6 participating in biosynthesis steps 1, 2, 3, 4, 5, and 6, respectively. It depends on pantetheine 4'-phosphate as a cofactor.

The enzyme catalyses 6 (S)-methylmalonyl-CoA + propanoyl-CoA + 6 NADPH + 12 H(+) = 6-deoxyerythronolide B + 6 CO2 + 6 NADP(+) + 7 CoA + H2O. Its pathway is antibiotic biosynthesis; erythromycin biosynthesis. Involved in the biosynthesis of antibiotic erythromycin via the biosynthesis of its aglycone precursor, 6-deoxyerythronolide B (6-dEB). This chain is Erythronolide synthase EryA2, found in Saccharopolyspora erythraea (Streptomyces erythraeus).